Here is a 540-residue protein sequence, read N- to C-terminus: Probable protein kinase UbiB (540 aa).

Residues 24-44 (LLFDQPLLPWWLASLRLLMPW) traverse the membrane as a helical segment. Positions 126-494 (RFDVEPLASA…RRRQGDRWAL (369 aa)) constitute a Protein kinase domain. ATP contacts are provided by residues 132–140 (LASASVAQV) and Lys154. The active-site Proton acceptor is the Asp289. Helical transmembrane passes span 496 to 516 (LLGA…AETA) and 518 to 538 (LAAP…YLIV).

Belongs to the ABC1 family. UbiB subfamily.

Its subcellular location is the cell inner membrane. It functions in the pathway cofactor biosynthesis; ubiquinone biosynthesis [regulation]. Is probably a protein kinase regulator of UbiI activity which is involved in aerobic coenzyme Q (ubiquinone) biosynthesis. The protein is Probable protein kinase UbiB of Pseudomonas putida (strain ATCC 700007 / DSM 6899 / JCM 31910 / BCRC 17059 / LMG 24140 / F1).